Here is a 357-residue protein sequence, read N- to C-terminus: DNA replication and repair protein RecF (357 aa).

30-37 is a binding site for ATP; the sequence is GANGSGKT.

The protein belongs to the RecF family.

The protein localises to the cytoplasm. Its function is as follows. The RecF protein is involved in DNA metabolism; it is required for DNA replication and normal SOS inducibility. RecF binds preferentially to single-stranded, linear DNA. It also seems to bind ATP. This is DNA replication and repair protein RecF from Salmonella paratyphi B (strain ATCC BAA-1250 / SPB7).